The sequence spans 172 residues: 3-hydroxydecanoyl-[acyl-carrier-protein] dehydratase (172 aa).

The active site involves His-71.

Belongs to the thioester dehydratase family. FabA subfamily. In terms of assembly, homodimer.

It is found in the cytoplasm. The enzyme catalyses a (3R)-hydroxyacyl-[ACP] = a (2E)-enoyl-[ACP] + H2O. It catalyses the reaction (3R)-hydroxydecanoyl-[ACP] = (2E)-decenoyl-[ACP] + H2O. The catalysed reaction is (2E)-decenoyl-[ACP] = (3Z)-decenoyl-[ACP]. Its pathway is lipid metabolism; fatty acid biosynthesis. Its function is as follows. Necessary for the introduction of cis unsaturation into fatty acids. Catalyzes the dehydration of (3R)-3-hydroxydecanoyl-ACP to E-(2)-decenoyl-ACP and then its isomerization to Z-(3)-decenoyl-ACP. Can catalyze the dehydratase reaction for beta-hydroxyacyl-ACPs with saturated chain lengths up to 16:0, being most active on intermediate chain length. The chain is 3-hydroxydecanoyl-[acyl-carrier-protein] dehydratase from Photorhabdus laumondii subsp. laumondii (strain DSM 15139 / CIP 105565 / TT01) (Photorhabdus luminescens subsp. laumondii).